A 276-amino-acid chain; its full sequence is Shikimate dehydrogenase (NADP(+)) (276 aa).

Shikimate-binding positions include 15–17 (SKS) and Thr-62. Lys-66 serves as the catalytic Proton acceptor. Glu-78 is a binding site for NADP(+). Asn-87 and Asp-103 together coordinate shikimate. NADP(+) contacts are provided by residues 127 to 131 (GAGGV), 150 to 155 (NRTHIK), and Met-214. Tyr-216 provides a ligand contact to shikimate. Gly-239 provides a ligand contact to NADP(+).

Belongs to the shikimate dehydrogenase family. In terms of assembly, homodimer.

The enzyme catalyses shikimate + NADP(+) = 3-dehydroshikimate + NADPH + H(+). It participates in metabolic intermediate biosynthesis; chorismate biosynthesis; chorismate from D-erythrose 4-phosphate and phosphoenolpyruvate: step 4/7. Its function is as follows. Involved in the biosynthesis of the chorismate, which leads to the biosynthesis of aromatic amino acids. Catalyzes the reversible NADPH linked reduction of 3-dehydroshikimate (DHSA) to yield shikimate (SA). In Haemophilus ducreyi (strain 35000HP / ATCC 700724), this protein is Shikimate dehydrogenase (NADP(+)).